The primary structure comprises 294 residues: tRNA dimethylallyltransferase (294 aa).

10-17 (GPTAVGKT) contacts ATP. Substrate is bound at residue 12–17 (TAVGKT). The segment at 35-38 (DSQQ) is interaction with substrate tRNA.

The protein belongs to the IPP transferase family. In terms of assembly, monomer. Requires Mg(2+) as cofactor.

The catalysed reaction is adenosine(37) in tRNA + dimethylallyl diphosphate = N(6)-dimethylallyladenosine(37) in tRNA + diphosphate. Its function is as follows. Catalyzes the transfer of a dimethylallyl group onto the adenine at position 37 in tRNAs that read codons beginning with uridine, leading to the formation of N6-(dimethylallyl)adenosine (i(6)A). The sequence is that of tRNA dimethylallyltransferase from Streptococcus pneumoniae (strain P1031).